We begin with the raw amino-acid sequence, 850 residues long: Vacuolar membrane protease (850 aa).

The Cytoplasmic portion of the chain corresponds to 1–20; sequence MASSRAQWFNPIAFTPWPVT. The helical transmembrane segment at 21-41 threads the bilayer; that stretch reads CITTIVYLALLIPILVINLVV. Topologically, residues 42 to 282 are vacuolar; sequence PSAPETNPKG…DGKSKDQNKV (241 aa). N-linked (GlcNAc...) asparagine glycans are attached at residues Asn53, Asn116, and Asn119. Positions 175 and 187 each coordinate Zn(2+). Glu221 serves as the catalytic Proton acceptor. Glu222 is a binding site for Zn(2+). The chain crosses the membrane as a helical span at residues 283 to 303; sequence NSGTGTLGVWFDMFGTAFAVF. Residues 304–308 lie on the Cytoplasmic side of the membrane; that stretch reads RLHTL. Residues 309-329 traverse the membrane as a helical segment; the sequence is FAISVALLVIAPLVIFVTSVI. The Vacuolar segment spans residues 330-363; that stretch reads LSKTDRMYLFSMSKSLEGTGDQVSLRGLRGFSRT. A helical transmembrane segment spans residues 364–384; sequence PIILVIATTIPICLAYLLEKV. The Cytoplasmic portion of the chain corresponds to 385–393; sequence NPYIVHSSQ. Residues 394-414 traverse the membrane as a helical segment; the sequence is FSVWSMMFSAWIFLAWFLACA. The Vacuolar portion of the chain corresponds to 415 to 425; sequence ADFFRPSALHR. Residues 426–446 traverse the membrane as a helical segment; the sequence is AYSYTWIFIATWIMLVINTVY. Topologically, residues 447–529 are cytoplasmic; sequence ANQKGIAAGP…TLPRWTWVLQ (83 aa). A helical membrane pass occupies residues 530–550; sequence LLLLAPIVLILVGQLALFLTA. Over 551–563 the chain is Vacuolar; the sequence is SMCQVGSDGVSTF. The chain crosses the membrane as a helical span at residues 564–584; the sequence is VVYLACSVFTTLLCIPLFPLI. Topologically, residues 585–590 are cytoplasmic; the sequence is HRFTYH. Residues 591–611 form a helical membrane-spanning segment; the sequence is IPTFLFLVFIGTLIYNLVAFP. At 612–850 the chain is on the vacuolar side; it reads FSPANRLKTF…VEASHSFTIQ (239 aa). N-linked (GlcNAc...) asparagine glycans are attached at residues Asn630, Asn658, and Asn702.

The protein belongs to the peptidase M28 family. Zn(2+) serves as cofactor.

It is found in the vacuole membrane. In terms of biological role, may be involved in vacuolar sorting and osmoregulation. In Ajellomyces capsulatus (strain NAm1 / WU24) (Darling's disease fungus), this protein is Vacuolar membrane protease.